A 1003-amino-acid chain; its full sequence is Serine/threonine-protein kinase spk-1 (1003 aa).

Disordered regions lie at residues 92-112 (NSTN…TQNE), 169-309 (NEND…SATS), and 337-408 (RPSI…KRGG). The span at 202 to 211 (SDEEDVESQD) shows a compositional bias: acidic residues. Basic and acidic residues predominate over residues 248-265 (SNDDKNEKDVLVDEDTSK). Residues 285–300 (TIDSSVSSSTSSSSTG) show a composition bias toward low complexity. Positions 346-359 (KKTEVNANEERLDD) are enriched in basic and acidic residues. Residues 422–904 (YHVIRKLGWG…AKIALKHPFL (483 aa)) enclose the Protein kinase domain. ATP contacts are provided by residues 428–436 (LGWGHFSTV) and Lys451. The active-site Proton acceptor is Asp555. Residues 927–1003 (DGLIPEPFDG…DIERFQLDLQ (77 aa)) are disordered. Residues 936–953 (GNEHQEVYRDENDSRSAS) show a composition bias toward basic and acidic residues. A compositionally biased stretch (low complexity) spans 954-964 (ERSANSRSAGG). The span at 983–992 (VITNNETTDI) shows a compositional bias: polar residues. The span at 994–1003 (DIERFQLDLQ) shows a compositional bias: basic and acidic residues.

This sequence belongs to the protein kinase superfamily. Ser/Thr protein kinase family. Interacts with rsp-3. Predominantly coexpressed with rsp-3 in adult hermaphrodite germlines.

The catalysed reaction is L-seryl-[protein] + ATP = O-phospho-L-seryl-[protein] + ADP + H(+). The enzyme catalyses L-threonyl-[protein] + ATP = O-phospho-L-threonyl-[protein] + ADP + H(+). Its function is as follows. Required for embryogenesis and germline development in both adult hermaphrodites and males. SR-protein kinase (SRPK) that binds directly to and phosphorylates the RS domain of rsp-3/CeSF2 in vitro. In Caenorhabditis elegans, this protein is Serine/threonine-protein kinase spk-1 (spk-1).